Reading from the N-terminus, the 275-residue chain is Bis(5'-nucleosyl)-tetraphosphatase, symmetrical (275 aa).

This sequence belongs to the Ap4A hydrolase family.

The catalysed reaction is P(1),P(4)-bis(5'-adenosyl) tetraphosphate + H2O = 2 ADP + 2 H(+). Functionally, hydrolyzes diadenosine 5',5'''-P1,P4-tetraphosphate to yield ADP. The sequence is that of Bis(5'-nucleosyl)-tetraphosphatase, symmetrical from Haemophilus influenzae (strain PittGG).